A 197-amino-acid chain; its full sequence is Dephospho-CoA kinase (197 aa).

In terms of domain architecture, DPCK spans 2 to 197 (IIGLTGGIAS…GAIKDLANLV (196 aa)). 10–15 (ASGKST) lines the ATP pocket.

Belongs to the CoaE family.

It is found in the cytoplasm. The catalysed reaction is 3'-dephospho-CoA + ATP = ADP + CoA + H(+). Its pathway is cofactor biosynthesis; coenzyme A biosynthesis; CoA from (R)-pantothenate: step 5/5. Functionally, catalyzes the phosphorylation of the 3'-hydroxyl group of dephosphocoenzyme A to form coenzyme A. The polypeptide is Dephospho-CoA kinase (Streptococcus thermophilus (strain CNRZ 1066)).